A 206-amino-acid chain; its full sequence is Ras-related protein Rab-18 (206 aa).

At methionine 1 the chain carries N-acetylmethionine. Serine 17, glycine 20, lysine 21, serine 22, serine 23, aspartate 34, proline 35, threonine 40, glycine 66, lysine 123, and aspartate 125 together coordinate GTP. Residue serine 22 participates in Mg(2+) binding. Short sequence motifs (switch) lie at residues 31–45 (DTFD…GVDF) and 63–80 (DTAG…YYRG). Position 40 (threonine 40) interacts with Mg(2+). Serine 144 is subject to Phosphoserine. Alanine 152 contacts GTP. Cysteine 199 is lipidated: S-palmitoyl cysteine. Cysteine methyl ester is present on cysteine 203. Residue cysteine 203 is the site of S-geranylgeranyl cysteine attachment. A propeptide spans 204–206 (SVL) (removed in mature form).

It belongs to the small GTPase superfamily. Rab family. In terms of assembly, interacts (in GTP-bound form) with ZFYVE1. Interacts with ZW10 and this interaction is enhanced in the presence of ZFYVE1. Interacts with BSCL2. Mg(2+) serves as cofactor. In terms of tissue distribution, expression is high in the brain, moderate in the pituitary, and low in the liver. Detected in all tissues. Highly enriched on apical endocytic structures in polarized epithelial cells of kidney proximal tubules. Detected on both the apical and basolateral domains in epithelial cells of the intestine.

The protein localises to the endoplasmic reticulum membrane. Its subcellular location is the golgi apparatus. It is found in the cis-Golgi network membrane. The protein resides in the lipid droplet. It localises to the apical cell membrane. The catalysed reaction is GTP + H2O = GDP + phosphate + H(+). Its activity is regulated as follows. Regulated by guanine nucleotide exchange factor (GEF) RAB3GAP1-RAB3GAP2 complex at the cis-Golgi membrane which promotes the exchange of bound GDP for free GTP. Regulated by GTPase activating protein (GAP) TBC1D20 at the ER membrane which increases the GTP hydrolysis activity. Inhibited by GDP dissociation inhibitors (GDIs) which prevent Rab-GDP dissociation. The small GTPases Rab are key regulators of intracellular membrane trafficking, from the formation of transport vesicles to their fusion with membranes. Rabs cycle between an inactive GDP-bound form and an active GTP-bound form that is able to recruit to membranes different sets of downstream effectors directly responsible for vesicle formation, movement, tethering and fusion. RAB18 is required for the localization of ZFYVE1 to lipid droplets and for its function in mediating the formation of endoplasmic reticulum-lipid droplets (ER-LD) contacts. Also required for maintaining endoplasmic reticulum structure. Plays a role in apical endocytosis/recycling. Plays a key role in eye and brain development and neurodegeneration. This chain is Ras-related protein Rab-18, found in Mus musculus (Mouse).